The sequence spans 304 residues: Acetylglutamate kinase (304 aa).

Substrate-binding positions include 75–76, R97, and N202; that span reads GG.

Belongs to the acetylglutamate kinase family. ArgB subfamily.

The protein resides in the cytoplasm. It carries out the reaction N-acetyl-L-glutamate + ATP = N-acetyl-L-glutamyl 5-phosphate + ADP. The protein operates within amino-acid biosynthesis; L-arginine biosynthesis; N(2)-acetyl-L-ornithine from L-glutamate: step 2/4. Functionally, catalyzes the ATP-dependent phosphorylation of N-acetyl-L-glutamate. This chain is Acetylglutamate kinase, found in Parvibaculum lavamentivorans (strain DS-1 / DSM 13023 / NCIMB 13966).